The chain runs to 183 residues: Glutamyl-tRNA(Gln) amidotransferase subunit F, mitochondrial (183 aa).

The N-terminal 23 residues, 1 to 23 (MSRMLNQIPRLITRSFRTSSVGY), are a transit peptide targeting the mitochondrion.

This sequence belongs to the GatF family. As to quaternary structure, subunit of the heterotrimeric GatFAB amidotransferase (AdT) complex, composed of A, B and F subunits.

It localises to the mitochondrion inner membrane. It catalyses the reaction L-glutamyl-tRNA(Gln) + L-glutamine + ATP + H2O = L-glutaminyl-tRNA(Gln) + L-glutamate + ADP + phosphate + H(+). Its function is as follows. Allows the formation of correctly charged Gln-tRNA(Gln) through the transamidation of misacylated Glu-tRNA(Gln) in the mitochondria. The reaction takes place in the presence of glutamine and ATP through an activated gamma-phospho-Glu-tRNA(Gln). Required for proper protein synthesis within the mitochondrion. The sequence is that of Glutamyl-tRNA(Gln) amidotransferase subunit F, mitochondrial from Debaryomyces hansenii (strain ATCC 36239 / CBS 767 / BCRC 21394 / JCM 1990 / NBRC 0083 / IGC 2968) (Yeast).